A 264-amino-acid chain; its full sequence is Putative hydroxypyruvate isomerase (264 aa).

Residues Glu145 and Glu243 each act as proton donor/acceptor in the active site.

Belongs to the hyi family.

It catalyses the reaction 3-hydroxypyruvate = 2-hydroxy-3-oxopropanoate. Its function is as follows. Catalyzes the reversible isomerization between hydroxypyruvate and 2-hydroxy-3-oxopropanoate (also termed tartronate semialdehyde). This chain is Putative hydroxypyruvate isomerase (Gip), found in Drosophila melanogaster (Fruit fly).